The following is a 479-amino-acid chain: Glutamate--tRNA ligase (479 aa).

The short motif at 9-19 (PSPTGLFHIGT) is the 'HIGH' region element. Positions 248 to 252 (KLSKR) match the 'KMSKS' region motif. Lys-251 contacts ATP.

The protein belongs to the class-I aminoacyl-tRNA synthetase family. Glutamate--tRNA ligase type 1 subfamily. Monomer.

It is found in the cytoplasm. The catalysed reaction is tRNA(Glu) + L-glutamate + ATP = L-glutamyl-tRNA(Glu) + AMP + diphosphate. Its function is as follows. Catalyzes the attachment of glutamate to tRNA(Glu) in a two-step reaction: glutamate is first activated by ATP to form Glu-AMP and then transferred to the acceptor end of tRNA(Glu). The chain is Glutamate--tRNA ligase from Prochlorococcus marinus (strain MIT 9312).